A 341-amino-acid polypeptide reads, in one-letter code: UDP-3-O-(3-hydroxymyristoyl)glucosamine N-acyltransferase (341 aa).

The active-site Proton acceptor is H239.

Belongs to the transferase hexapeptide repeat family. LpxD subfamily. As to quaternary structure, homotrimer.

It catalyses the reaction a UDP-3-O-[(3R)-3-hydroxyacyl]-alpha-D-glucosamine + a (3R)-hydroxyacyl-[ACP] = a UDP-2-N,3-O-bis[(3R)-3-hydroxyacyl]-alpha-D-glucosamine + holo-[ACP] + H(+). It carries out the reaction UDP-3-O-[(3R)-3-hydroxytetradecanoyl]-alpha-D-glucosamine + (3R)-hydroxytetradecanoyl-[ACP] = UDP-2-N,3-O-bis[(3R)-3-hydroxytetradecanoyl]-alpha-D-glucosamine + holo-[ACP] + H(+). Its pathway is glycolipid biosynthesis; lipid IV(A) biosynthesis; lipid IV(A) from (3R)-3-hydroxytetradecanoyl-[acyl-carrier-protein] and UDP-N-acetyl-alpha-D-glucosamine: step 3/6. Functionally, catalyzes the N-acylation of UDP-3-O-(hydroxytetradecanoyl)glucosamine using 3-hydroxytetradecanoyl-ACP as the acyl donor. Is involved in the biosynthesis of lipid A, a phosphorylated glycolipid that anchors the lipopolysaccharide to the outer membrane of the cell. This Salmonella paratyphi A (strain ATCC 9150 / SARB42) protein is UDP-3-O-(3-hydroxymyristoyl)glucosamine N-acyltransferase.